Reading from the N-terminus, the 162-residue chain is Heat shock protein beta-6 (162 aa).

An involved in stabilization of the HSPB1:HSBP6 heterodimer region spans residues 1-72; it reads MEIPVPVQPS…PTAQVSTDSG (72 aa). Residue Ser16 is modified to Phosphoserine. The sHSP domain maps to 56 to 162; the sequence is RAPSVALPTA…AQLPSPPAAK (107 aa). At Gln66 the chain carries Deamidated glutamine. Ser157 is subject to Phosphoserine.

The protein belongs to the small heat shock protein (HSP20) family. In terms of assembly, homodimer. Small heat shock proteins form high molecular mass oligomers containing variable number of monomers; these oligomers display a very flexible quaternary structure easily exchanging their subunits. Heterooligomer with HSPB1; formed through oligomerization of HSPB1:HSBP6 dimers; subunit exchange leads to formation of at least two different heterooligomeric complexes, differing in variable quantities of HSPB1 and HSPB6 homodimers in addition to HSPB1:HSPB6 heterodimers. Heterooligomer with CRYAB; large heterooligomers consist of CRYAB homodimers and HSPB5:HSPB6 heterodimers but lacking HSPB6 homodimers. Interacts with BAG3. Interacts (phosphorylated) with YWHAZ. Interacts with PDE4A and PDE4D; required for maintenance of the non-phosphorylated state of HSPB6 under basal conditions. Interacts with KDR. Interacts with PRKD1. Post-translationally, phosphorylated at Ser-16 by PKA and probably PKD1K; required to protect cardiomyocytes from apoptosis.

Its subcellular location is the cytoplasm. The protein resides in the nucleus. It is found in the secreted. Small heat shock protein which functions as a molecular chaperone probably maintaining denatured proteins in a folding-competent state. Seems to have versatile functions in various biological processes. Plays a role in regulating muscle function such as smooth muscle vasorelaxation and cardiac myocyte contractility. May regulate myocardial angiogenesis implicating KDR. Overexpression mediates cardioprotection and angiogenesis after induced damage. Stabilizes monomeric YWHAZ thereby supporting YWHAZ chaperone-like activity. In Mus musculus (Mouse), this protein is Heat shock protein beta-6 (Hspb6).